Here is a 388-residue protein sequence, read N- to C-terminus: Venom acid phosphatase Acph-1 (388 aa).

A signal peptide spans 1-15 (MSVIAILAMVVGVQA). The Nucleophile role is filled by H26. Disulfide bonds link C145-C355 and C330-C334. N-linked (GlcNAc...) asparagine glycosylation is found at N182 and N228. The active-site Proton donor is E273. N-linked (GlcNAc...) asparagine glycosylation occurs at N366.

The protein belongs to the histidine acid phosphatase family. Expressed by the venom gland.

The protein localises to the secreted. The catalysed reaction is a phosphate monoester + H2O = an alcohol + phosphate. The protein is Venom acid phosphatase Acph-1 of Apis mellifera (Honeybee).